Consider the following 193-residue polypeptide: Flagellar transcriptional regulator FlhC (193 aa).

Cys-138, Cys-141, Cys-158, and Cys-161 together coordinate Zn(2+).

It belongs to the FlhC family. In terms of assembly, heterohexamer composed of two FlhC and four FlhD subunits. Each FlhC binds a FlhD dimer, forming a heterotrimer, and a hexamer assembles by dimerization of two heterotrimers. It depends on Zn(2+) as a cofactor.

The protein localises to the cytoplasm. Functionally, functions in complex with FlhD as a master transcriptional regulator that regulates transcription of several flagellar and non-flagellar operons by binding to their promoter region. Activates expression of class 2 flagellar genes, including fliA, which is a flagellum-specific sigma factor that turns on the class 3 genes. Also regulates genes whose products function in a variety of physiological pathways. This Yersinia enterocolitica protein is Flagellar transcriptional regulator FlhC.